Reading from the N-terminus, the 394-residue chain is 1-deoxy-D-xylulose 5-phosphate reductoisomerase (394 aa).

Positions 12, 13, 14, 15, 38, 41, and 132 each coordinate NADPH. Lys-133 provides a ligand contact to 1-deoxy-D-xylulose 5-phosphate. Residue Glu-134 coordinates NADPH. Asp-156 lines the Mn(2+) pocket. Residues Ser-157, Glu-158, Ser-182, and His-205 each coordinate 1-deoxy-D-xylulose 5-phosphate. Glu-158 serves as a coordination point for Mn(2+). Residue Gly-211 coordinates NADPH. 1-deoxy-D-xylulose 5-phosphate contacts are provided by Ser-218, Asn-223, Lys-224, and Glu-227. Glu-227 serves as a coordination point for Mn(2+).

Belongs to the DXR family. Mg(2+) is required as a cofactor. The cofactor is Mn(2+).

It catalyses the reaction 2-C-methyl-D-erythritol 4-phosphate + NADP(+) = 1-deoxy-D-xylulose 5-phosphate + NADPH + H(+). Its pathway is isoprenoid biosynthesis; isopentenyl diphosphate biosynthesis via DXP pathway; isopentenyl diphosphate from 1-deoxy-D-xylulose 5-phosphate: step 1/6. Its function is as follows. Catalyzes the NADPH-dependent rearrangement and reduction of 1-deoxy-D-xylulose-5-phosphate (DXP) to 2-C-methyl-D-erythritol 4-phosphate (MEP). In Arthrobacter sp. (strain FB24), this protein is 1-deoxy-D-xylulose 5-phosphate reductoisomerase.